A 313-amino-acid chain; its full sequence is Deoxyribonucleoside regulator (313 aa).

Residues 23 to 42 (QQQIAEQLNISRPTVSRLLQ) constitute a DNA-binding region (H-T-H motif).

It belongs to the SorC transcriptional regulatory family. Homooctamer.

Negative regulator of the dra-nupC-pdp operon. DeoR binds cooperatively to the operator DNA, which consists of a palindrome and a direct repeat sequence located 3' to the palindrome. This chain is Deoxyribonucleoside regulator, found in Bacillus subtilis (strain 168).